The sequence spans 267 residues: Transmembrane protein 106B (267 aa).

Topologically, residues 1–92 (MGKALSHVAK…QRLRPRRTKL (92 aa)) are cytoplasmic. The helical transmembrane segment at 93-113 (YVMASVILCLLLCTLAVFFLF) threads the bilayer. At 114-267 (PRSIDVNYVG…EYSLNTPLTG (154 aa)) the chain is on the lumenal side. Residues Asn-141, Asn-147, Asn-160, and Asn-179 are each glycosylated (N-linked (GlcNAc...) asparagine). Residues Cys-210 and Cys-249 are joined by a disulfide bond. Asn-252 carries an N-linked (GlcNAc...) asparagine glycan.

Belongs to the TMEM106 family.

It is found in the late endosome membrane. The protein localises to the lysosome membrane. Its subcellular location is the cell membrane. In neurons, involved in the transport of late endosomes/lysosomes. May be involved in dendrite morphogenesis and maintenance by regulating lysosomal trafficking. May act as a molecular brake for retrograde transport of late endosomes/lysosomes, possibly via its interaction with MAP6. In motoneurons, may mediate the axonal transport of lysosomes and axonal sorting at the initial segment. It remains unclear whether TMEM106B affects the transport of moving lysosomes in the anterograde or retrograde direction in neurites and whether it is particularly important in the sorting of lysosomes in axons or in dendrites. In neurons, may also play a role in the regulation of lysosomal size and responsiveness to stress. Required for proper lysosomal acidification. The protein is Transmembrane protein 106B (tmem106b) of Danio rerio (Zebrafish).